We begin with the raw amino-acid sequence, 220 residues long: U1 small nuclear ribonucleoprotein C (220 aa).

Residues 4-36 (YYCDYCDIYLTHDSMNARKAHNSGRNHVANVRD) form a Matrin-type zinc finger. 2 stretches are compositionally biased toward pro residues: residues 88-130 (PGPP…PFLP) and 147-165 (PPFP…PFRP). The disordered stretch occupies residues 88-220 (PGPPPPGAFP…HPDRLRMLGQ (133 aa)). Low complexity predominate over residues 166-200 (PMGMGMPPAPAQAQAQGSPMGMPQQGQQGTFTPTQ). The segment covering 211–220 (HPDRLRMLGQ) has biased composition (basic and acidic residues).

The protein belongs to the U1 small nuclear ribonucleoprotein C family. In terms of assembly, U1 snRNP is composed of the 7 core Sm proteins B/B', D1, D2, D3, E, F and G that assemble in a heptameric protein ring on the Sm site of the small nuclear RNA to form the core snRNP, and at least 3 U1 snRNP-specific proteins U1-70K, U1-A and U1-C. U1-C interacts with U1 snRNA and the 5' splice-site region of the pre-mRNA.

The protein resides in the nucleus. Functionally, component of the spliceosomal U1 snRNP, which is essential for recognition of the pre-mRNA 5' splice-site and the subsequent assembly of the spliceosome. U1-C is directly involved in initial 5' splice-site recognition for both constitutive and regulated alternative splicing. The interaction with the 5' splice-site seems to precede base-pairing between the pre-mRNA and the U1 snRNA. Stimulates commitment or early (E) complex formation by stabilizing the base pairing of the 5' end of the U1 snRNA and the 5' splice-site region. The chain is U1 small nuclear ribonucleoprotein C from Cryptococcus neoformans var. neoformans serotype D (strain JEC21 / ATCC MYA-565) (Filobasidiella neoformans).